We begin with the raw amino-acid sequence, 285 residues long: Protein FD (285 aa).

A compositionally biased stretch (basic residues) spans Met1–Arg12. 5 disordered regions span residues Met1 to Ser59, Asn79 to Phe107, Leu115 to Ser134, Ser198 to Gln236, and Lys257 to Phe285. Polar residues predominate over residues Leu13–Val25. Residues Ser26 to Ser50 show a composition bias toward low complexity. Residues His98 to Phe107 are compositionally biased toward polar residues. The bZIP domain occupies Gly214 to Leu277. The segment at Arg216–Lys235 is basic motif. Residues Leu242–Leu263 form a leucine-zipper region. Over residues Pro272–Phe285 the composition is skewed to polar residues. Thr282 is subject to Phosphothreonine.

Belongs to the bZIP family. As to quaternary structure, self-interacts. Interacts with FT and FDP/BZIP27. Interacts with GRF3 and GRF4, and in a calcium-independent manner, with CPK6 and CPK33. Post-translationally, phosphorylated at Thr-282 in a calcium-dependent manner by CPK6 and CPK33. As to expression, highly expressed in shoot apex.

It is found in the nucleus. Functionally, transcription factor required for the transition to flowering promoted by FT. The polypeptide is Protein FD (Arabidopsis thaliana (Mouse-ear cress)).